A 175-amino-acid chain; its full sequence is MLLTISGLPGSGTTTVGKLLAEHYSVDIISAGDVFRGLAKERGVTLAEFGRLAESDPSIDVEIDKRQSDIANSSDNLILEGRLAGQMAKKALKIWIKAPLEVRVKRIVDREGSSFDVRMQETVEREASEALRYKEIHSIDIHDLSVYDLVIDSSRWDQFVITDMLKKAIDASGSF.

Residue 7–15 coordinates ATP; it reads GLPGSGTTT.

It belongs to the cytidylate kinase family. Type 2 subfamily.

It is found in the cytoplasm. It catalyses the reaction CMP + ATP = CDP + ADP. The catalysed reaction is dCMP + ATP = dCDP + ADP. The polypeptide is Cytidylate kinase (Methanococcoides burtonii (strain DSM 6242 / NBRC 107633 / OCM 468 / ACE-M)).